Here is a 763-residue protein sequence, read N- to C-terminus: Phosphoglycerol transferase I (763 aa).

4 consecutive transmembrane segments (helical) span residues 1–21, 26–46, 77–97, and 108–128; these read MSEL…AWKA, WWFA…ITLF, ILPG…LGWI, and FGYS…SPAF.

It belongs to the OpgB family.

Its subcellular location is the cell inner membrane. It carries out the reaction a phosphatidylglycerol + a membrane-derived-oligosaccharide D-glucose = a 1,2-diacyl-sn-glycerol + a membrane-derived-oligosaccharide 6-(glycerophospho)-D-glucose.. It functions in the pathway glycan metabolism; osmoregulated periplasmic glucan (OPG) biosynthesis. In terms of biological role, transfers a phosphoglycerol residue from phosphatidylglycerol to the membrane-bound nascent glucan backbones. The protein is Phosphoglycerol transferase I of Escherichia coli O17:K52:H18 (strain UMN026 / ExPEC).